The following is a 168-amino-acid chain: Cilia- and flagella-associated protein 276 (168 aa).

2 disordered regions span residues 35–61 and 149–168; these read AHLA…RDTF and HTAA…FFST. The segment covering 38 to 55 has biased composition (polar residues); sequence AQQQDPWSRLSSTPTATS.

Microtubule inner protein component of sperm flagellar doublet microtubules. Predominantly expressed in nervous system tissues, such as the spinal cord, cerebrum, cerebellum, and sciatic nerve.

Its subcellular location is the cytoplasm. It localises to the cytoskeleton. The protein resides in the cilium axoneme. It is found in the flagellum axoneme. In terms of biological role, microtubule inner protein (MIP) part of the dynein-decorated doublet microtubules (DMTs) in cilia axoneme, which is required for motile cilia beating. May play an important role for the maintenance of myelin-axon integrity. May affect intracellular Ca(2+) homeostasis. This Mus musculus (Mouse) protein is Cilia- and flagella-associated protein 276.